We begin with the raw amino-acid sequence, 446 residues long: MPFIPHTPDDIEKMLAVIGAESIDQLFDEIPSALANIQQVPPGLNEAGITRLMEKREPNKQLCFIGAGAYEHHIPAAVWEIATRGEFYTAYTPYQAEASQGSLQLIYEYQTMMAELMAMDVSNASLYDGASALAEAALMAVRIKRGKAQRILVPASVNPFYRKVLSSIVEQQKINVEIIPFDPTMGIVNSELLKAKNAEGAAAIIIPQPNFFGCLEAVDVLTDWAHANDLLVIASVNPTAMALLKPPGQWGQKGADIVCGEGQPLGVPLASGGPYFGFMCCKKDYVRQLPGRIVGRTVDKKGREGFTLTLQAREQHIRRSKATSNICTNQGLAVVAATIYLSLLGATGLREVALASHTQSRDLFQRLSAVKGVSPVFSSPIFHEFVVRLEKPVEEVLAAMAEQGIQAGFSLKNDYPKLGNGLLICVTDTKTDDDLMAYENALRSIQ.

The protein belongs to the GcvP family. N-terminal subunit subfamily. As to quaternary structure, the glycine cleavage system is composed of four proteins: P, T, L and H. In this organism, the P 'protein' is a heterodimer of two subunits.

The catalysed reaction is N(6)-[(R)-lipoyl]-L-lysyl-[glycine-cleavage complex H protein] + glycine + H(+) = N(6)-[(R)-S(8)-aminomethyldihydrolipoyl]-L-lysyl-[glycine-cleavage complex H protein] + CO2. Functionally, the glycine cleavage system catalyzes the degradation of glycine. The P protein binds the alpha-amino group of glycine through its pyridoxal phosphate cofactor; CO(2) is released and the remaining methylamine moiety is then transferred to the lipoamide cofactor of the H protein. The sequence is that of Probable glycine dehydrogenase (decarboxylating) subunit 1 from Coxiella burnetii (strain CbuK_Q154) (Coxiella burnetii (strain Q154)).